The sequence spans 164 residues: Choriogonadotropin subunit beta (164 aa).

Residues 1–20 (MEMLQGLLLCLLLSTGGAWA) form the signal peptide. Disulfide bonds link Cys29-Cys77, Cys43-Cys92, Cys46-Cys130, Cys54-Cys108, Cys58-Cys110, and Cys113-Cys120. Residue Asn50 is glycosylated (N-linked (GlcNAc...) asparagine). Residues 133-164 (HTSQDSSSKDPPRNLTSPSQLPEPADAPLVPQ) form a disordered region. The O-linked (GalNAc...) serine glycan is linked to Ser140. An N-linked (GlcNAc...) asparagine glycan is attached at Asn146. Ser151 carries O-linked (GalNAc...) serine glycosylation.

This sequence belongs to the glycoprotein hormones subunit beta family. As to quaternary structure, heterodimer of a common alpha chain and a unique beta chain which confers biological specificity to thyrotropin, lutropin, follitropin and gonadotropin.

It is found in the secreted. Its function is as follows. Stimulates the ovaries to synthesize the steroids that are essential for the maintenance of pregnancy. The sequence is that of Choriogonadotropin subunit beta (CGB) from Aotus nancymaae (Ma's night monkey).